A 419-amino-acid polypeptide reads, in one-letter code: Hyaluronidase-3 (419 aa).

Residues 1–16 (MTMQLGLALVLGVAMC) form the signal peptide. Cystine bridges form between C42-C331, C205-C220, C356-C367, C361-C395, and C397-C406. N-linked (GlcNAc...) asparagine glycosylation occurs at N69. E129 serves as the catalytic Proton donor. N215 carries N-linked (GlcNAc...) asparagine glycosylation. Residues 352-407 (AAMACSHQRCHGHGRCAWQDPGQLKVFLHLHPGGSPGAWESFSCRCYWGWAGPTCQ) enclose the EGF-like domain.

This sequence belongs to the glycosyl hydrolase 56 family. In terms of processing, N-glycosylated. In terms of tissue distribution, highly expressed in bladder, spleen and liver. Expressed at low levels in the kidney.

It localises to the secreted. The protein resides in the cell membrane. It is found in the cytoplasmic vesicle. The protein localises to the secretory vesicle. Its subcellular location is the acrosome. It localises to the endoplasmic reticulum. The protein resides in the early endosome. The enzyme catalyses Random hydrolysis of (1-&gt;4)-linkages between N-acetyl-beta-D-glucosamine and D-glucuronate residues in hyaluronate.. Its function is as follows. Facilitates sperm penetration into the layer of cumulus cells surrounding the egg by digesting hyaluronic acid. Involved in induction of the acrosome reaction in the sperm. Involved in follicular atresia, the breakdown of immature ovarian follicles that are not selected to ovulate. Induces ovarian granulosa cell apoptosis, possibly via apoptotic signaling pathway involving CASP8 and CASP3 activation, and poly(ADP-ribose) polymerase (PARP) cleavage. Has no hyaluronidase activity in embryonic fibroblasts in vitro. Has no hyaluronidase activity in granulosa cells in vitro. The polypeptide is Hyaluronidase-3 (HYAL3) (Sus scrofa (Pig)).